The chain runs to 403 residues: Nucleoporin nup44 (403 aa).

Polar residues-rich tracts occupy residues 1–31 (MAFSFGQQGSSIKAPSIGSTGVFGQSNTTKP) and 67–124 (FGKT…DETN). The tract at residues 1–124 (MAFSFGQQGS…NPTKPVDETN (124 aa)) is disordered.

It is found in the cytoplasm. The protein localises to the nucleus. Functionally, functions as a component of the nuclear pore complex (NPC). NPC components, collectively referred to as nucleoporins (NUPs), can play the role of both NPC structural components and of docking or interaction partners for transiently associated nuclear transport factors. Active directional transport is assured by both, a Phe-Gly (FG) repeat affinity gradient for these transport factors across the NPC and a transport cofactor concentration gradient across the nuclear envelope. This chain is Nucleoporin nup44 (nup44), found in Schizosaccharomyces pombe (strain 972 / ATCC 24843) (Fission yeast).